We begin with the raw amino-acid sequence, 1710 residues long: Centrosomal protein of 152 kDa (1710 aa).

3 disordered regions span residues 1–27 (MSLD…YERE), 39–79 (HDML…NEQM), and 108–139 (NRSK…SKCE). The interaction with PLK4 stretch occupies residues 1 to 60 (MSLDFGSVALPVQNEDEEYDEEDYEREKELQQLLTDLPHDMLDDDLSSPELQYSDCSEDG). The segment covering 14–24 (NEDEEYDEEDY) has biased composition (acidic residues). The span at 108 to 123 (NRSKTEDRHPVYHPEE) shows a compositional bias: basic and acidic residues. Residues 234-490 (ENMQIIQLQV…ISLYESAAKL (257 aa)) are a coiled coil. Positions 587–604 (DEKSIEVETKTDTSEKPK) are enriched in basic and acidic residues. The interval 587–611 (DEKSIEVETKTDTSEKPKNQLWPES) is disordered. Coiled coils occupy residues 615–664 (DVVR…QDFD), 700–772 (EKQQ…LEKE), and 902–993 (AVSE…INEV). Positions 1120–1142 (ELSKDSASQGTGQGDPGPAAGHH) are disordered. Residues 1170-1241 (HCFQELEKAK…LEELQTLCKT (72 aa)) are a coiled coil. A Phosphothreonine modification is found at Thr-1241.

The protein belongs to the CEP152 family. In terms of assembly, interacts (via N-terminus) with PLK4; the interaction is mutally exclusive with a PLK4:CEP192 interaction. Interacts (via C-terminus) with CPAP (via-N-terminus). Interacts with CINP. Interacts with CDK5RAP2, WDR62, CEP63 and CEP131. CEP63, CDK5RAP2, CEP152, WDR62 are proposed to form a stepwise assembled complex at the centrosome forming a ring near parental centrioles. Interacts with DEUP1; this interaction recruits CEP152 to the deuterosome. The interactions with CEP63 and DEUP1 are mutually exclusive. Interacts with CCDC66.

The protein resides in the cytoplasm. Its subcellular location is the cytoskeleton. It localises to the microtubule organizing center. The protein localises to the centrosome. It is found in the centriole. Its function is as follows. Necessary for centrosome duplication; the function also seems to involve CEP63, CDK5RAP2 and WDR62 through a stepwise assembled complex at the centrosome that recruits CDK2 required for centriole duplication. Acts as a molecular scaffold facilitating the interaction of PLK4 and CPAP, 2 molecules involved in centriole formation. Proposed to snatch PLK4 away from PLK4:CEP92 complexes in early G1 daughter centriole and to reposition PLK4 at the outer boundary of a newly forming CEP152 ring structure. Also plays a key role in deuterosome-mediated centriole amplification in multiciliated that can generate more than 100 centrioles. Overexpression of CEP152 can drive amplification of centrioles. In Homo sapiens (Human), this protein is Centrosomal protein of 152 kDa.